The sequence spans 69 residues: Protein hunchback (69 aa).

3 consecutive C2H2-type zinc fingers follow at residues 1–11 (KHHLEYHLRNH), 17–39 (FKCE…LKSH), and 45–69 (YRCA…KYSH).

The protein belongs to the hunchback C2H2-type zinc-finger protein family.

The protein localises to the nucleus. Gap class segmentation protein that controls development of head structures. This chain is Protein hunchback (hb), found in Apis mellifera (Honeybee).